The chain runs to 486 residues: F-box protein At1g80960 (486 aa).

One can recognise an F-box domain in the interval 49-97 (VDWISKLPDDVLLIILSRLSTEEAIRTSVVSKRWEHVWNQMSHLVFDMR).

This is F-box protein At1g80960 from Arabidopsis thaliana (Mouse-ear cress).